The following is a 51-amino-acid chain: Micropeptide inhibiting actin cytoskeleton (51 aa).

Residues 1–22 are disordered; sequence MERAGVPGFSPRRSSVEAKMQS.

In terms of assembly, interacts with aquaporin AQP2.

In terms of biological role, reduces filamentous actin fibers by interacting with aquaporin AQP2 which leads to inhibition of the expression of SEPTIN4 and integrin ITGB4. Also inhibits the activation of the EREG/EGFR signaling pathway through interaction with AQP2. This is Micropeptide inhibiting actin cytoskeleton from Homo sapiens (Human).